The following is a 635-amino-acid chain: DNA-directed RNA polymerase subunit gamma (635 aa).

4 residues coordinate Zn(2+): C74, C76, C89, and C92. Mg(2+)-binding residues include D471, D473, and D475.

Belongs to the RNA polymerase beta' chain family. RpoC1 subfamily. As to quaternary structure, in cyanobacteria the RNAP catalytic core is composed of 2 alpha, 1 beta, 1 beta', 1 gamma and 1 omega subunit. When a sigma factor is associated with the core the holoenzyme is formed, which can initiate transcription. The cofactor is Mg(2+). Requires Zn(2+) as cofactor.

The catalysed reaction is RNA(n) + a ribonucleoside 5'-triphosphate = RNA(n+1) + diphosphate. In terms of biological role, DNA-dependent RNA polymerase catalyzes the transcription of DNA into RNA using the four ribonucleoside triphosphates as substrates. The chain is DNA-directed RNA polymerase subunit gamma from Prochlorococcus marinus (strain NATL2A).